The sequence spans 413 residues: uncharacterized protein (413 aa).

A helical membrane pass occupies residues 14–34 (LLFFTVVIIPIFYYIYKIVYL). Asn46, Asn55, Asn103, Asn171, Asn179, Asn184, Asn220, Asn252, Asn260, Asn273, Asn362, Asn366, Asn374, Asn378, Asn393, and Asn408 each carry an N-linked (GlcNAc...) asparagine; by host glycan. Over residues 250–263 (TKNSTETNSDNNSE) the composition is skewed to low complexity. Positions 250 to 277 (TKNSTETNSDNNSEIVSETNSETNYSTP) are disordered. Positions 264–277 (IVSETNSETNYSTP) are enriched in polar residues.

The protein resides in the membrane. This is an uncharacterized protein from Acanthamoeba polyphaga (Amoeba).